The following is a 977-amino-acid chain: uncharacterized protein (977 aa).

A disordered region spans residues 100–152; that stretch reads ATSPLQQNGKSRDTEKPPSMKEKDLSSNSSSQHDKAFHERVDQGKNKSSTTKY. Basic and acidic residues-rich tracts occupy residues 109-124 and 131-144; these read KSRD…EKDL and QHDK…DQGK. The residue at position 165 (serine 165) is a Phosphoserine. Polar residues-rich tracts occupy residues 166 to 175 and 183 to 193; these read PGQSVNSLKP and STKSSTSSEMH. The disordered stretch occupies residues 166 to 194; it reads PGQSVNSLKPNSGDEVPSTKSSTSSEMHT.

This is an uncharacterized protein from Schizosaccharomyces pombe (strain 972 / ATCC 24843) (Fission yeast).